Reading from the N-terminus, the 208-residue chain is Holliday junction branch migration complex subunit RuvA (208 aa).

Positions 1 to 67 (MIGWLHGTIG…EDGQQLYGFE (67 aa)) are domain I. The segment at 68–146 (TKADRNLFRL…ERWQQQGGST (79 aa)) is domain II. Residues 147–157 (PLRLVEPVAES) are flexible linker. The tract at residues 157–208 (SRELRATLEALGYGPEEVSAAVAQAGSQGLDPEQPMEEWLRHCLAWLSRQAG) is domain III.

Belongs to the RuvA family. In terms of assembly, homotetramer. Forms an RuvA(8)-RuvB(12)-Holliday junction (HJ) complex. HJ DNA is sandwiched between 2 RuvA tetramers; dsDNA enters through RuvA and exits via RuvB. An RuvB hexamer assembles on each DNA strand where it exits the tetramer. Each RuvB hexamer is contacted by two RuvA subunits (via domain III) on 2 adjacent RuvB subunits; this complex drives branch migration. In the full resolvosome a probable DNA-RuvA(4)-RuvB(12)-RuvC(2) complex forms which resolves the HJ.

It is found in the cytoplasm. In terms of biological role, the RuvA-RuvB-RuvC complex processes Holliday junction (HJ) DNA during genetic recombination and DNA repair, while the RuvA-RuvB complex plays an important role in the rescue of blocked DNA replication forks via replication fork reversal (RFR). RuvA specifically binds to HJ cruciform DNA, conferring on it an open structure. The RuvB hexamer acts as an ATP-dependent pump, pulling dsDNA into and through the RuvAB complex. HJ branch migration allows RuvC to scan DNA until it finds its consensus sequence, where it cleaves and resolves the cruciform DNA. In Synechococcus sp. (strain RCC307), this protein is Holliday junction branch migration complex subunit RuvA.